The chain runs to 151 residues: uncharacterized protein (151 aa).

The protein to B.subtilis pcf and to sigma factors.

This is an uncharacterized protein from Bacillus subtilis (strain 168).